A 397-amino-acid polypeptide reads, in one-letter code: MLAQSCCLRLLILLLLFTSICSVPKKSLKYFRNRKLRERRIKLFGTKKTEIQSLLISTWNYTDANLQAWSVLQQGHRRTRQAVIQGCMACQNQRCGLLLAGRSSPDTEGALTLEAAIMDGESLEYGAVAGMDGVRNAILVADAVLKYTKHSVLVGKSATKFARSLGYKEEYLTDARTKNVLKKWSSNGCQPNFWRDVHPSPAENCGPYSPLPEHLHQHPMHQEYAITQGQHDQLAFLALDAEGKFHVASQSSGAQFRIPGRVGDSAVPGAGIYADNEVGGAVASGDGDVLMRHLPAFLAVEAMRAGKDPDQAAEWVVQRLLRHNTEFNGAVVVVNRRGIYAAACAGLDEFNFVVSGGKEYLSMARVERVKCLERENEVIDGGPKGLFPTIPEKQEVP.

The first 22 residues, 1–22 (MLAQSCCLRLLILLLLFTSICS), serve as a signal peptide directing secretion. Intrachain disulfides connect C90–C95, C189–C205, and C344–C371.

Belongs to the Ntn-hydrolase family.

This is L-asparaginase-like protein GM15681 from Drosophila sechellia (Fruit fly).